A 625-amino-acid polypeptide reads, in one-letter code: MMNESSTEKKNELSLSFAALGVVFGDIGTSPLYAFGQVIKYFPINDHNIYGILSLIFWSLIIIVSIKYLVIVFRADNDGEGGIIALAGLIRQKIKKPGGWLLFITLVGIGLIIGDGILTPAISILSAVEGLESLSPNLAKYVLPVTLIILFFLFKMQSIGTGKIGIYFAPVMLIWFITIGVLGFLQIIQNPKVLMAINPYYAIYFFMIHKYFALFILGGVFLVMTGGEALFADLGHFGKKAIRTGWFAVALPALLLCYFGQGAFVLMHIEYIKYPFFSLSPDWFLPVMIILATIATIIASQAIISAAFSILKQASLLNLIPRLKIIYTSKFEKGEVYLPLINFILALGTCSLVVIFKSSSNLADAYGIAVNLDMLITTVLVGIIAYYCWNWHAFKVMIFPLILVIELAFFAGNIPKLLTGGWIPILIAFLGFVVMYTWHCGFEKLRELHHRDALMDAFIIDELNQNKISRQSGMGLYIIDPYDCEGESLLHHLRLNRIFFENMIFVSIKIENKPYIPIEDKFELIKKAEGFYLIFIHYGFTENINLPNELDEMFKRVYLPFEIIKNKLIYFIEIVFVEMTRERQKHMYMWQKHLFSLMIRNAVPDIQFYRLPYNKTIAIGTYYQL.

The next 12 membrane-spanning stretches (helical) occupy residues 15–35 (LSFA…LYAF), 52–72 (ILSL…LVIV), 98–118 (GGWL…DGIL), 134–154 (LSPN…FFLF), 164–184 (IGIY…VLGF), 203–223 (IYFF…VFLV), 246–266 (WFAV…AFVL), 284–304 (FLPV…QAII), 336–356 (VYLP…VVIF), 365–385 (AYGI…GIIA), 394–414 (FKVM…AGNI), and 417–437 (LLTG…VMYT).

This sequence belongs to the HAK/KUP transporter (TC 2.A.72) family.

The protein resides in the cell inner membrane. The enzyme catalyses K(+)(in) + H(+)(in) = K(+)(out) + H(+)(out). Functionally, transport of potassium into the cell. Likely operates as a K(+):H(+) symporter. This Legionella pneumophila subsp. pneumophila (strain Philadelphia 1 / ATCC 33152 / DSM 7513) protein is Probable potassium transport system protein Kup 2.